The primary structure comprises 488 residues: Glycogen synthase (488 aa).

Residue Arg-20 participates in ADP-alpha-D-glucose binding.

The protein belongs to the glycosyltransferase 1 family. Bacterial/plant glycogen synthase subfamily.

It carries out the reaction [(1-&gt;4)-alpha-D-glucosyl](n) + ADP-alpha-D-glucose = [(1-&gt;4)-alpha-D-glucosyl](n+1) + ADP + H(+). The protein operates within glycan biosynthesis; glycogen biosynthesis. Its function is as follows. Synthesizes alpha-1,4-glucan chains using ADP-glucose. In Chlorobaculum parvum (strain DSM 263 / NCIMB 8327) (Chlorobium vibrioforme subsp. thiosulfatophilum), this protein is Glycogen synthase.